Reading from the N-terminus, the 192-residue chain is Fe/S biogenesis protein NfuA (192 aa).

Residues C149 and C152 each coordinate [4Fe-4S] cluster.

The protein belongs to the NfuA family. As to quaternary structure, homodimer. The cofactor is [4Fe-4S] cluster.

In terms of biological role, involved in iron-sulfur cluster biogenesis. Binds a 4Fe-4S cluster, can transfer this cluster to apoproteins, and thereby intervenes in the maturation of Fe/S proteins. Could also act as a scaffold/chaperone for damaged Fe/S proteins. The chain is Fe/S biogenesis protein NfuA from Pseudoalteromonas atlantica (strain T6c / ATCC BAA-1087).